Here is an 876-residue protein sequence, read N- to C-terminus: ATP-dependent helicase Lhr-Core (876 aa).

Residues Gln-37, Lys-60, Thr-61, Asp-175, Glu-176, Arg-374, and His-377 each coordinate ATP. The Helicase ATP-binding domain occupies 41–232; that stretch reads IPLIKKGKNV…FLVGGNGDYE (192 aa). Positions 175–178 match the DEAH box motif; that stretch reads DEIH. The Helicase C-terminal domain occupies 249–421; it reads PVKDLVHATE…NIHVPENPLD (173 aa). The tract at residues 422-506 is WH domain; sequence VLTQLIVAAS…IFFLNSGTIP (85 aa). The interval 507 to 876 is domain 4; sequence DEAMIPVKME…DLEYTEAGIK (370 aa).

This sequence belongs to the Lhr helicase family. Lhr-Core subfamily. In terms of assembly, monomer.

It carries out the reaction Couples ATP hydrolysis with the unwinding of duplex DNA by translocating in the 3'-5' direction.. The enzyme catalyses ATP + H2O = ADP + phosphate + H(+). In terms of biological role, probably part of a 4-gene DNA damage response locus in which the upstream ups system, in combination with this downstream locus, functions in homologous recombination to rescue Sulfolobales from DNA-damaging threats. DNA helicase that translocates in a 3'-5' direction on single-stranded (ss)DNA. Binds Holliday junction (HJ) DNA, Y-shaped DNA, DNA with a 3'-overhang and single-stranded (ss)DNA with high affinity; binds double-stranded (ds)DNA with less affinity. Has helicase activity on DNA with a 3'-overhang, Y-shaped DNA and HJ DNA. Does not unwind blunt-ended dsDNA or DNA with a 5'-overhang. This chain is ATP-dependent helicase Lhr-Core, found in Sulfolobus acidocaldarius (strain ATCC 33909 / DSM 639 / JCM 8929 / NBRC 15157 / NCIMB 11770).